The primary structure comprises 874 residues: Envelope glycoprotein B (874 aa).

The first 25 residues, 1–25 (MGVGGGPRVVLCLWCVAALLCQGVA), serve as a signal peptide directing secretion. Topologically, residues 26-727 (QEVVAETTTP…SGVISFFKNP (702 aa)) are virion surface. Intrachain disulfides connect Cys59-Cys523, Cys77-Cys479, Cys149-Cys214, Cys306-Cys353, and Cys546-Cys583. The involved in fusion and/or binding to host membrane stretch occupies residues 116–122 (IYKGWSE). Asn171 carries N-linked (GlcNAc...) asparagine; by host glycosylation. Residues 200–208 (RNLLWSYTT) are involved in fusion and/or binding to host membrane. N-linked (GlcNAc...) asparagine; by host glycans are attached at residues Asn247, Asn281, Asn302, Asn323, Asn348, Asn356, Asn376, Asn409, Asn412, Asn444, Asn558, Asn610, and Asn624. The tract at residues 412 to 450 (NATASPTSTPTTSPRRRRRDTSSVSGGGNNGDNSTKEES) is disordered. Residues 673–725 (LDDSIDHGRDSFIQTLGDIMQDLGTIGKVVVNVASGVFSLFGSIVSGVISFFK) form a hydrophobic membrane proximal region region. The helical transmembrane segment at 728–748 (FGGMLLIVLIIAGVVVVYLFM) threads the bilayer. Topologically, residues 749–874 (TRSRSIYSAP…VEAGTADTGV (126 aa)) are intravirion. The segment at 830-874 (RRGGGGYQRLQRDGSDDEGDYEPLRRQDGGYDDVDVEAGTADTGV) is disordered. The short motif at 836–839 (YQRL) is the Internalization motif element.

Belongs to the herpesviridae glycoprotein B family. In terms of assembly, homotrimer; disulfide-linked. Binds to heparan sulfate proteoglycans. Interacts with gH/gL heterodimer. A proteolytic cleavage by host furin generates two subunits that remain linked by disulfide bonds.

Its subcellular location is the virion membrane. The protein localises to the host cell membrane. It is found in the host endosome membrane. The protein resides in the host Golgi apparatus membrane. Functionally, envelope glycoprotein that forms spikes at the surface of virion envelope. Essential for the initial attachment to heparan sulfate moieties of the host cell surface proteoglycans. Involved in fusion of viral and cellular membranes leading to virus entry into the host cell. Following initial binding to its host receptors, membrane fusion is mediated by the fusion machinery composed at least of gB and the heterodimer gH/gL. May be involved in the fusion between the virion envelope and the outer nuclear membrane during virion egress. The polypeptide is Envelope glycoprotein B (Equus caballus (Horse)).